Consider the following 366-residue polypeptide: Cell division protein FtsZ 1 (366 aa).

Residues Gly-45 to Asn-49, Gly-132 to Gly-134, Glu-163, Arg-167, and Asp-210 each bind GTP. The span at Pro-344 to Glu-354 shows a compositional bias: acidic residues. Positions Pro-344–Leu-366 are disordered. Residues Glu-355–Leu-366 are compositionally biased toward low complexity.

This sequence belongs to the FtsZ family. As to quaternary structure, homodimer. Polymerizes to form a dynamic ring structure in a strictly GTP-dependent manner. Interacts directly with several other division proteins.

Its subcellular location is the cytoplasm. Essential cell division protein that forms a contractile ring structure (Z ring) at the future cell division site. The regulation of the ring assembly controls the timing and the location of cell division. One of the functions of the FtsZ ring is to recruit other cell division proteins to the septum to produce a new cell wall between the dividing cells. Binds GTP and shows GTPase activity. The sequence is that of Cell division protein FtsZ 1 from Pyrococcus woesei.